The chain runs to 151 residues: Ribosome maturation factor RimP (151 aa).

The protein belongs to the RimP family.

It is found in the cytoplasm. Functionally, required for maturation of 30S ribosomal subunits. The chain is Ribosome maturation factor RimP from Saccharophagus degradans (strain 2-40 / ATCC 43961 / DSM 17024).